The following is a 231-amino-acid chain: Flagellar L-ring protein (231 aa).

The N-terminal stretch at 1-18 (MNRYVSVLALSGIAVLAG) is a signal peptide. Residue Cys-19 is the site of N-palmitoyl cysteine attachment. Residue Cys-19 is the site of S-diacylglycerol cysteine attachment.

This sequence belongs to the FlgH family. As to quaternary structure, the basal body constitutes a major portion of the flagellar organelle and consists of four rings (L,P,S, and M) mounted on a central rod.

The protein localises to the cell outer membrane. It localises to the bacterial flagellum basal body. Its function is as follows. Assembles around the rod to form the L-ring and probably protects the motor/basal body from shearing forces during rotation. The polypeptide is Flagellar L-ring protein (Pseudomonas fluorescens (strain SBW25)).